A 389-amino-acid chain; its full sequence is Probable family 17 glucosidase SCW10 (389 aa).

An N-terminal signal peptide occupies residues 1–18 (MRFSNFLTVSALLTGALG). Residues 19–29 (APAVRHKHEKR) constitute a propeptide that is removed on maturation. The interval 70 to 134 (ASQATTSTLE…SSASSSISAS (65 aa)) is disordered. Asn279 is a glycosylation site (N-linked (GlcNAc...) asparagine). The active-site Nucleophile is the Glu326.

It belongs to the glycosyl hydrolase 17 family. Post-translationally, glycosylated.

Its subcellular location is the secreted. It localises to the cell wall. In terms of biological role, glucanases possibly play a role in cell expansion during growth, in cell-cell fusion during mating, and in spore release during sporulation. This chain is Probable family 17 glucosidase SCW10 (SCW10), found in Saccharomyces cerevisiae (strain ATCC 204508 / S288c) (Baker's yeast).